The chain runs to 159 residues: 2-C-methyl-D-erythritol 2,4-cyclodiphosphate synthase (159 aa).

Residues aspartate 8 and histidine 10 each coordinate a divalent metal cation. Residues 8-10 and 34-35 contribute to the 4-CDP-2-C-methyl-D-erythritol 2-phosphate site; these read DVH and HS. Histidine 42 provides a ligand contact to a divalent metal cation. 4-CDP-2-C-methyl-D-erythritol 2-phosphate-binding positions include 56-58, 61-65, 100-106, 132-135, phenylalanine 139, and arginine 142; these read DIG, FPDTD, AQAPKML, and TTTE.

The protein belongs to the IspF family. Homotrimer. It depends on a divalent metal cation as a cofactor.

The catalysed reaction is 4-CDP-2-C-methyl-D-erythritol 2-phosphate = 2-C-methyl-D-erythritol 2,4-cyclic diphosphate + CMP. Its pathway is isoprenoid biosynthesis; isopentenyl diphosphate biosynthesis via DXP pathway; isopentenyl diphosphate from 1-deoxy-D-xylulose 5-phosphate: step 4/6. In terms of biological role, involved in the biosynthesis of isopentenyl diphosphate (IPP) and dimethylallyl diphosphate (DMAPP), two major building blocks of isoprenoid compounds. Catalyzes the conversion of 4-diphosphocytidyl-2-C-methyl-D-erythritol 2-phosphate (CDP-ME2P) to 2-C-methyl-D-erythritol 2,4-cyclodiphosphate (ME-CPP) with a corresponding release of cytidine 5-monophosphate (CMP). This Salmonella choleraesuis (strain SC-B67) protein is 2-C-methyl-D-erythritol 2,4-cyclodiphosphate synthase.